Here is a 502-residue protein sequence, read N- to C-terminus: RNA-splicing ligase RtcB homolog 2 (502 aa).

Positions 120, 123, 228, 260, and 354 each coordinate Mn(2+). Residue 227–231 (NHYAE) participates in GMP binding. GMP is bound by residues 354-355 (HN), 403-406 (GGSM), S410, and 429-432 (HGAG). Residue H429 is the GMP-histidine intermediate of the active site.

Belongs to the RtcB family. Catalytic component of the tRNA-splicing ligase complex. The cofactor is Mn(2+).

It carries out the reaction a 3'-end 3'-phospho-ribonucleotide-RNA + a 5'-end dephospho-ribonucleoside-RNA + GTP = a ribonucleotidyl-ribonucleotide-RNA + GMP + diphosphate. The enzyme catalyses a 3'-end 2',3'-cyclophospho-ribonucleotide-RNA + a 5'-end dephospho-ribonucleoside-RNA + GTP + H2O = a ribonucleotidyl-ribonucleotide-RNA + GMP + diphosphate + H(+). In terms of biological role, catalytic subunit of the tRNA-splicing ligase complex that acts by directly joining spliced tRNA halves to mature-sized tRNAs by incorporating the precursor-derived splice junction phosphate into the mature tRNA as a canonical 3',5'-phosphodiester. May act as an RNA ligase with broad substrate specificity, and may function toward other RNAs. The chain is RNA-splicing ligase RtcB homolog 2 from Culex quinquefasciatus (Southern house mosquito).